Here is a 396-residue protein sequence, read N- to C-terminus: GPN-loop GTPase 1 (396 aa).

A compositionally biased stretch (low complexity) spans Met-1–Lys-13. The interval Met-1 to Glu-30 is disordered. Gly-44–Thr-49 is a binding site for GTP. Residues Gly-101–Asn-103 carry the Gly-Pro-Asn (GPN)-loop; involved in dimer interface motif. Asn-204–Asp-207 provides a ligand contact to GTP. Residues Tyr-284–Glu-387 are a coiled coil. Residues Asp-325–Tyr-342 are compositionally biased toward basic and acidic residues. Residues Asp-325–Ile-396 are disordered. A compositionally biased stretch (acidic residues) spans Asp-343 to Leu-380.

Belongs to the GPN-loop GTPase family. Heterodimer with gpn3. Binds to RNA polymerase II (RNAPII).

It is found in the cytoplasm. The protein localises to the nucleus. In terms of biological role, small GTPase required for proper nuclear import of RNA polymerase II (RNAPII). May act at an RNAP assembly step prior to nuclear import. This is GPN-loop GTPase 1 (gpn1) from Dictyostelium discoideum (Social amoeba).